The primary structure comprises 252 residues: Imidazole glycerol phosphate synthase subunit HisF (252 aa).

Catalysis depends on residues aspartate 11 and aspartate 130.

The protein belongs to the HisA/HisF family. In terms of assembly, heterodimer of HisH and HisF.

It is found in the cytoplasm. It catalyses the reaction 5-[(5-phospho-1-deoxy-D-ribulos-1-ylimino)methylamino]-1-(5-phospho-beta-D-ribosyl)imidazole-4-carboxamide + L-glutamine = D-erythro-1-(imidazol-4-yl)glycerol 3-phosphate + 5-amino-1-(5-phospho-beta-D-ribosyl)imidazole-4-carboxamide + L-glutamate + H(+). Its pathway is amino-acid biosynthesis; L-histidine biosynthesis; L-histidine from 5-phospho-alpha-D-ribose 1-diphosphate: step 5/9. Functionally, IGPS catalyzes the conversion of PRFAR and glutamine to IGP, AICAR and glutamate. The HisF subunit catalyzes the cyclization activity that produces IGP and AICAR from PRFAR using the ammonia provided by the HisH subunit. The polypeptide is Imidazole glycerol phosphate synthase subunit HisF (Petrotoga mobilis (strain DSM 10674 / SJ95)).